An 813-amino-acid chain; its full sequence is MSEYNFTQIEQQAQEYWRENNSFKAVEDKNKEKFYCLSMLPYPSGTLHMGHVRNYTIGDVIARYQKMQGKNVLHPMGWDAFGLPAENAAIKHKKSPYEWTKSNIAYMRSQLDSLGFSFDWSREVATCDESYYKWEQWFFIQLYKKGLAYRKNSVVNWDPVDQTVLANEQVVDGRGWRSGALIEKKEIPQWFLKITDYADELLKDINQLDGWPEAVKTMQTNWIGKSKGLTVKFKIQNSDKEIEVFTTRPDTLMGVSYLGIAPEHPLALEEAKTNSQLKSFIDECKRISTMEADLATQEKKGFKTSIQAIHPISGETVNVWVANFVLMGYGSGAVMSVPAHDQRDWEFAQKYNIALKQVIKPSDNKSKLDLDKEAFTEKGILINSGEFDGLNFKSAYQAIKKYLFDNDKGYETTNFRIHDWGISRQRYWGCPIPMIHCNDCGLVPEKEENLPVKLPTNVTLTEAGSPLKDIPEFLNVACPNCGKPATRETDTFDTFFESSWYYARYTCPTADKMLSEEANYWLPVDKYIGGIEHAIMHLLYARFFHKLMRDQGLVTSDEPFKNLLTQGMVLKDGAKMSKSKGNTVDPQELIDKYGADTVRLFSMFAAPPEQSLEWSDTGVDGANKFLRKVYNYAYTNKEILAKNITIDVTKLSKNDKKARYEIYANLKQAIFDFDKSQFNTVVSACMKILNTLNNYDNLSDSVKLEGFSILLRILSPFTPHICHYLWQEIGLGEDILHTQFPTVDDIALEKDEFLLVVQINGKVKVKLELDASLTKEQVEQEVLSDEQIKTFIKDKQIVKVIYVPQKLINIVVK.

Positions 41-51 match the 'HIGH' region motif; it reads PYPSGTLHMGH. Residues 575–579 carry the 'KMSKS' region motif; sequence KMSKS. Lys-578 is an ATP binding site.

It belongs to the class-I aminoacyl-tRNA synthetase family.

Its subcellular location is the cytoplasm. The catalysed reaction is tRNA(Leu) + L-leucine + ATP = L-leucyl-tRNA(Leu) + AMP + diphosphate. This is Leucine--tRNA ligase from Francisella philomiragia subsp. philomiragia (strain ATCC 25017 / CCUG 19701 / FSC 153 / O#319-036).